The chain runs to 148 residues: Gametocyte-specific factor 1-like (148 aa).

CHHC U11-48K-type zinc fingers lie at residues 6–33 (FEIC…RRKN) and 40–67 (MATC…VNRS). Positions 9, 15, 25, 29, 43, 49, 59, and 63 each coordinate Zn(2+). Residues 67–99 (SAVEEEDTENPLKVSPPSSEQNDDTQQVSPCLP) form a disordered region. The span at 82–95 (PPSSEQNDDTQQVS) shows a compositional bias: polar residues.

It belongs to the UPF0224 (FAM112) family.

In Homo sapiens (Human), this protein is Gametocyte-specific factor 1-like (GTSF1L).